A 236-amino-acid chain; its full sequence is Probable fimbrial chaperone EcpE (236 aa).

Residues 1-27 (MFRRRGVTLTKALLTVVCMLAAPLTQA) form the signal peptide.

The protein belongs to the EcpB/EcpE family.

Part of the ecpRABCDE operon, which encodes the E.coli common pilus (ECP). ECP is found in both commensal and pathogenic strains and plays a dual role in early-stage biofilm development and host cell recognition. The sequence is that of Probable fimbrial chaperone EcpE (ecpE) from Escherichia coli O18:K1:H7 (strain IHE3034 / ExPEC).